A 344-amino-acid chain; its full sequence is Ferrochelatase (344 aa).

2 residues coordinate Fe cation: H211 and E292.

This sequence belongs to the ferrochelatase family.

The protein resides in the cytoplasm. It catalyses the reaction heme b + 2 H(+) = protoporphyrin IX + Fe(2+). The protein operates within porphyrin-containing compound metabolism; protoheme biosynthesis; protoheme from protoporphyrin-IX: step 1/1. Functionally, catalyzes the ferrous insertion into protoporphyrin IX. The polypeptide is Ferrochelatase (Methylobacillus flagellatus (strain ATCC 51484 / DSM 6875 / VKM B-1610 / KT)).